A 1085-amino-acid chain; its full sequence is Aminopeptidase N (1085 aa).

Residues 1-30 constitute a signal peptide (required for ER targeting and membrane association; not cleaved); it reads MKLTKGCAYKYIIFTVLILANILYDNKKRC. The sufficient for targeting to the food vacuole stretch occupies residues 1 to 200; the sequence is MKLTKGCAYK…VKKNEPKIHY (200 aa). The tract at residues 108–130 is disordered; that stretch reads EKGDNNNNNHQNNNGNDNKKRLG. Residues 112 to 123 show a composition bias toward low complexity; that stretch reads NNNNNHQNNNGN. 4 residues coordinate a peptide: Glu-319, Gly-460, Ala-461, and Glu-463. His-496 lines the Zn(2+) pocket. Glu-497 (proton acceptor) is an active-site residue. Zn(2+) contacts are provided by His-500 and Glu-519.

Belongs to the peptidase M1 family. In terms of assembly, heterodimer of the p68 form and the p35 form which are derived from the p120 precursor. The cofactor is Zn(2+). Post-translationally, the full length protein appears to be cleaved into a 120 kDa precursor. This precursor is then proteolytically cleaved at the N-terminus generating a 96 kDa form which is further processed at the C-terminus into 68 kDa and 35 kDa forms that remain associated.

The protein localises to the parasitophorous vacuole membrane. It localises to the nucleus. Its subcellular location is the cytoplasm. The protein resides in the vacuole lumen. With respect to regulation, inhibited by 1,10-phenanthroline, EDTA and bestatin. Inhibited by (Benzyl)Tyr-Ala (BTA). Activity is not affected by phosphoramidin, PMSF, leupeptin, iodoacetamide or pepstatin. Functionally, displays aminopeptidase activity with a broad substrate specificity. Preferentially, cleaves after Leu and Met, but also cleaves after Ala and Arg. Low activity towards Lys, Phe, Tyr, Trp, Gln, Ser and Gly and negligible activity towards Glu, Asp, Pro, Ile, Thr, Val, His and Asn. Has dipeptidase activity. Plays a role in the terminal stages of host hemoglobin digestion by cleaving the N-terminal residue of small hemoglobin-derived oligopeptides. The protein is Aminopeptidase N of Plasmodium falciparum (isolate 3D7).